A 411-amino-acid polypeptide reads, in one-letter code: Serine hydroxymethyltransferase (411 aa).

(6S)-5,6,7,8-tetrahydrofolate is bound at residue 120–122; sequence GHL. Lys225 bears the N6-(pyridoxal phosphate)lysine mark. 350 to 352 serves as a coordination point for (6S)-5,6,7,8-tetrahydrofolate; the sequence is SPF.

Belongs to the SHMT family. Homodimer. It depends on pyridoxal 5'-phosphate as a cofactor.

It localises to the cytoplasm. The enzyme catalyses (6R)-5,10-methylene-5,6,7,8-tetrahydrofolate + glycine + H2O = (6S)-5,6,7,8-tetrahydrofolate + L-serine. It participates in one-carbon metabolism; tetrahydrofolate interconversion. It functions in the pathway amino-acid biosynthesis; glycine biosynthesis; glycine from L-serine: step 1/1. In terms of biological role, catalyzes the reversible interconversion of serine and glycine with tetrahydrofolate (THF) serving as the one-carbon carrier. This reaction serves as the major source of one-carbon groups required for the biosynthesis of purines, thymidylate, methionine, and other important biomolecules. Also exhibits THF-independent aldolase activity toward beta-hydroxyamino acids, producing glycine and aldehydes, via a retro-aldol mechanism. The chain is Serine hydroxymethyltransferase from Lactobacillus acidophilus (strain ATCC 700396 / NCK56 / N2 / NCFM).